The primary structure comprises 199 residues: MTHSTDIATLARWMAADFSNQAQAFENPPFYAHIRVCMRPLPWEVLSGVGFFVEQAYDYMLNDPYRLRVLKLMIVGDRIHIENYTVKQEENFYGASRDLNRLQTLTSESLEKLPGCNMIVEWTGNSFKGTVEPGKGCIVVRKGQKTYLDSEFEINEEKFISLDRGRDLETDAHIWGSVAGPFYFVRLHNFADEVKISAE.

It belongs to the CpcT/CpeT biliprotein lyase family.

Its function is as follows. Catalyzes the site-selective attachment of phycocyanobilin (PCB) to 'Cys-154' of C-phycocyanin subunit beta (CpcB) and to 'Cys-153' of phycoerythrocyanin subunit beta (PecB). Does not have chromophore lyase activity for ApcA1, ApcA2, ApcB, ApcD, ApcF or PecA. The polypeptide is Phycocyanobilin lyase CpcT (cpcT1) (Nostoc sp. (strain PCC 7120 / SAG 25.82 / UTEX 2576)).